A 434-amino-acid polypeptide reads, in one-letter code: MTEFFADIAPVRYEGPDSANPLAFRHYDPDEMVMGKRMEDHLRFAVAYWHSFAWEGGDPFGGQTLIRPWHPQDDMTRAKVKADAAFEMFDILGVPYFCWHDADIRPEAATFAESLRNFEEIIDHFLAKMESRRTRLLWGTANMFSHRRWMAGASTNPDPDVFAYAAATVKTCLDATQRMGGQNYVLWGGREGYETLLNTDMGRELDHMGRFLSMVVDYKHKIGFKGAILVEPKPQEPSKHQYDFDAATCIGFLRKYGLEGEVKLNLEQGHAILAGHSFEHEIAVAASEGMLGSIDMNRNDYQSGWDTDQFPNNVPEVALCYYHILRAGGFTTGGTNFDAKLRRQSLDATDLIAAHVGGMDICARGLKAAAAMIEDGGLETALRDRYAGWDSDHGQGILESDLDSLFARVLAGEIDPQPHSGRQEMLENHVNRFV.

Residues His-100 and Asp-103 contribute to the active site. Glu-231, Glu-267, His-270, Asp-295, Asp-306, Asp-308, and Asp-338 together coordinate Mg(2+).

The protein belongs to the xylose isomerase family. Homotetramer. The cofactor is Mg(2+).

The protein resides in the cytoplasm. The enzyme catalyses alpha-D-xylose = alpha-D-xylulofuranose. In Ruegeria pomeroyi (strain ATCC 700808 / DSM 15171 / DSS-3) (Silicibacter pomeroyi), this protein is Xylose isomerase.